Here is a 403-residue protein sequence, read N- to C-terminus: Phosphopentomutase (403 aa).

Mn(2+)-binding residues include aspartate 13, aspartate 298, histidine 303, aspartate 339, histidine 340, and histidine 351.

Belongs to the phosphopentomutase family. It depends on Mn(2+) as a cofactor.

Its subcellular location is the cytoplasm. The catalysed reaction is 2-deoxy-alpha-D-ribose 1-phosphate = 2-deoxy-D-ribose 5-phosphate. It catalyses the reaction alpha-D-ribose 1-phosphate = D-ribose 5-phosphate. Its pathway is carbohydrate degradation; 2-deoxy-D-ribose 1-phosphate degradation; D-glyceraldehyde 3-phosphate and acetaldehyde from 2-deoxy-alpha-D-ribose 1-phosphate: step 1/2. In terms of biological role, isomerase that catalyzes the conversion of deoxy-ribose 1-phosphate (dRib-1-P) and ribose 1-phosphate (Rib-1-P) to deoxy-ribose 5-phosphate (dRib-5-P) and ribose 5-phosphate (Rib-5-P), respectively. The sequence is that of Phosphopentomutase from Streptococcus pneumoniae (strain JJA).